Consider the following 363-residue polypeptide: Cell division cycle-associated protein 3 (363 aa).

Polar residues predominate over residues 1 to 12 (MGSAESKAQVTP). Disordered regions lie at residues 1-81 (MGSA…TPLR), 126-152 (VESQ…KAET), 191-210 (MNDQ…EESP), and 231-363 (ENLN…HSNS). An F-box-like region spans residues 93-152 (KQLSEVFVAEDSSTEGGPLGFTGPEATNLERQVVESQTAPPAGEHVNDHEVEPSVEKAET). Residues 137–152 (HVNDHEVEPSVEKAET) are compositionally biased toward basic and acidic residues. A compositionally biased stretch (acidic residues) spans 192–210 (NDQEESPIAETMNDQEESP). Residues 259–285 (SVVSTESTQATGQQQKTRGKSPRSSGV) are compositionally biased toward polar residues. A compositionally biased stretch (low complexity) spans 296–308 (LLSSSSGRSPLRI). The span at 311–321 (EDNSPNTNTQH) shows a compositional bias: polar residues. The KEN box motif lies at 353-355 (KEN).

As to quaternary structure, interacts with wee1, when wee1 is phosphorylated at 'Ser-38'. In terms of processing, phosphorylated. Ubiquitinated and degraded by the APC/C-Cdh1 complex during G1 phase.

Its subcellular location is the cytoplasm. It is found in the cytosol. The protein operates within protein modification; protein ubiquitination. F-box-like protein which is required for entry into mitosis. Acts by participating in E3 ligase complexes that mediate the ubiquitination and degradation of WEE1 kinase at G2/M phase. This is Cell division cycle-associated protein 3 (cdca3) from Xenopus laevis (African clawed frog).